Reading from the N-terminus, the 427-residue chain is FAD-dependent monooxygenase OpS4 (427 aa).

The first 22 residues, Met1–Ala22, serve as a signal peptide directing secretion. Residue Glu37 participates in FAD binding. The N-linked (GlcNAc...) asparagine glycan is linked to Asn54. Arg112, Asp306, and Ala319 together coordinate FAD.

This sequence belongs to the paxM FAD-dependent monooxygenase family. It depends on FAD as a cofactor.

Its pathway is secondary metabolite biosynthesis. Its function is as follows. FAD-dependent monooxygenase; part of the gene cluster that mediates the biosynthesis of the bibenzoquinone oosporein, a metabolite required for fungal virulence that acts by evading host immunity to facilitate fungal multiplication in insects. The non-reducing polyketide synthase OpS1 produces orsellinic acid by condensing acetyl-CoA with 3 malonyl-CoA units. Orsellinic acid is then hydroxylated to benzenetriol by the hydroxylase OpS4. The intermediate is oxidized either nonenzymatically to 5,5'-dideoxy-oosporein or enzymatically to benzenetetrol by the oxidoreductase OpS7. The latter is further dimerized to oosporein by the catalase OpS5. OpS6 probably functions en route for protecting cells against oxidative stress by scavenging any leaked free radical form of benzenetetrol by activating the thiol group of glutathione. The protein is FAD-dependent monooxygenase OpS4 of Beauveria bassiana (strain ARSEF 2860) (White muscardine disease fungus).